The following is a 404-amino-acid chain: Coenzyme F420H(2) oxidase (404 aa).

His-84, Glu-86, Asp-88, His-89, His-152, Asp-170, and His-233 together coordinate Fe cation. The region spanning 259 to 399 is the Flavodoxin-like domain; that stretch reads VTVIYDTMHH…ACFEAGRRLA (141 aa). FMN contacts are provided by residues 265-270, 317-320, and 351-356; these read TMHHST, AIYD, and SMGGRG.

The protein in the N-terminal section; belongs to the zinc metallo-hydrolase group 3 family. Requires FMN as cofactor. Fe cation is required as a cofactor.

It catalyses the reaction 2 reduced coenzyme F420-(gamma-L-Glu)(n) + O2 = 2 oxidized coenzyme F420-(gamma-L-Glu)(n) + 2 H2O + 2 H(+). Catalyzes the oxidation of F420H(2) with O(2). May be involved in O(2) detoxification, reducing the intracellular O(2) concentration to a level allowing growth at the expense of methane formation. The polypeptide is Coenzyme F420H(2) oxidase (Methanothermobacter thermautotrophicus (strain ATCC 29096 / DSM 1053 / JCM 10044 / NBRC 100330 / Delta H) (Methanobacterium thermoautotrophicum)).